The sequence spans 437 residues: Transcription factor AP-2-alpha (437 aa).

A Glycyl lysine isopeptide (Lys-Gly) (interchain with G-Cter in SUMO); alternate cross-link involves residue Lys-10. Lys-10 participates in a covalent cross-link: Glycyl lysine isopeptide (Lys-Gly) (interchain with G-Cter in SUMO2); alternate. The tract at residues 14–107 is disordered; it reads CEDRHDGTSN…GQRQSQESGL (94 aa). A PPxY motif motif is present at residues 57 to 62; that stretch reads YFPPPY. 2 stretches are compositionally biased toward low complexity: residues 65–74 and 88–101; these read IYPQSQDPYS and QPQP…GQRQ. Residues Lys-177 and Lys-184 each participate in a glycyl lysine isopeptide (Lys-Gly) (interchain with G-Cter in SUMO2) cross-link. Position 239 is a phosphoserine; by PKA (Ser-239). The segment at 280–410 is H-S-H (helix-span-helix), dimerization; sequence RRKAANVTLL…YLTEALKAMD (131 aa). A compositionally biased stretch (polar residues) spans 414–427; the sequence is LSNNPNSHTDNNAK. Residues 414–437 are disordered; that stretch reads LSNNPNSHTDNNAKSSDKEEKHRK. Basic and acidic residues predominate over residues 428–437; sequence SSDKEEKHRK.

This sequence belongs to the AP-2 family. As to quaternary structure, binds DNA as a dimer. Can form homodimers or heterodimers with other AP-2 family members. Interacts with WWOX. Interacts with CITED4. Interacts with UBE2I. Interacts with RALBP1 in a complex also containing EPN1 and NUMB during interphase and mitosis. Interacts with KCTD1; this interaction represses transcription activation. Interacts (via C-terminus) with CITED2 (via C-terminus); the interaction stimulates TFAP2A-transcriptional activation. Interacts (via N-terminus) with EP300 (via N-terminus); the interaction requires CITED2. Interacts with KCTD15; this interaction inhibits TFAP2A transcriptional activation. In terms of processing, sumoylated on Lys-10; which inhibits transcriptional activity.

It is found in the nucleus. Its function is as follows. Sequence-specific DNA-binding protein that interacts with inducible viral and cellular enhancer elements to regulate transcription of selected genes. AP-2 factors bind to the consensus sequence 5'-GCCNNNGGC-3' and activate genes involved in a large spectrum of important biological functions including proper eye, face, body wall, limb and neural tube development. They also suppress a number of genes including MCAM/MUC18, C/EBP alpha and MYC. AP-2-alpha is the only AP-2 protein required for early morphogenesis of the lens vesicle. Together with the CITED2 coactivator, stimulates the PITX2 P1 promoter transcription activation. Associates with chromatin to the PITX2 P1 promoter region. This chain is Transcription factor AP-2-alpha (TFAP2A), found in Homo sapiens (Human).